The following is a 522-amino-acid chain: Cytochrome P450 monooxygenase AKT7 (522 aa).

A helical transmembrane segment spans residues 10–30; sequence LYVTCTVLAALILGYIQAMII. Cysteine 452 serves as a coordination point for heme.

It belongs to the cytochrome P450 family. It depends on heme as a cofactor.

It localises to the membrane. It participates in mycotoxin biosynthesis. Its function is as follows. Cytochrome P450 monooxygenase; part of the gene clusters that mediate the biosynthesis of the host-selective toxins (HSTs) AK-toxins responsible for Japanese pear black spot disease by the Japanese pear pathotype. AK-toxins are esters of 9,10-epoxy 8-hydroxy 9-methyldecatrienoic acid (EDA). On cellular level, AK-toxins affect plasma membrane of susceptible cells and cause a sudden increase in loss of K(+) after a few minutes of toxin treatment. The acyl-CoA ligase AKT1, the hydrolase AKT2 and enoyl-CoA hydratase AKT3 are all involved in the biosynthesis of the AK-, AF- and ACT-toxin common 9,10-epoxy-8-hydroxy-9-methyl-decatrienoic acid (EDA) structural moiety. Part of the EDA biosynthesis occurs in the peroxisome since these 3 enzymes are localized in peroxisomes. The exact roles of the 3 enzymes, as well as of additional AK-toxin clusters enzymes, including AKT4, AKT6 and AKTS1, have still to be elucidated. The Cytochrome P450 monooxygenase AKT7 on the other side functions to limit production of EDA and AK-toxin, probably via the catalysis of a side reaction of EDA or its precursor. In Alternaria alternata (Alternaria rot fungus), this protein is Cytochrome P450 monooxygenase AKT7.